Here is a 412-residue protein sequence, read N- to C-terminus: ORC1-type DNA replication protein 2 (412 aa).

ATP-binding positions include 61-65 (VGKTA), Tyr207, and Arg219.

The protein belongs to the CDC6/cdc18 family.

In terms of biological role, involved in regulation of DNA replication. The polypeptide is ORC1-type DNA replication protein 2 (cdc6b) (Haloarcula marismortui (strain ATCC 43049 / DSM 3752 / JCM 8966 / VKM B-1809) (Halobacterium marismortui)).